We begin with the raw amino-acid sequence, 163 residues long: Bursicon (163 aa).

Positions 1–23 are cleaved as a signal peptide; it reads MKSTFLVVLELAFFLLPGRVLYA. Cystine bridges form between Cys39–Cys88, Cys53–Cys102, Cys63–Cys123, Cys67–Cys125, and Cys85–Cys128. Residues 39–129 form the CTCK domain; it reads CQVTPVIHVL…PLECMCRPCT (91 aa).

Heterodimer of burs and pburs.

The protein localises to the secreted. Functionally, final heterodimeric neurohormone released at the end of the molting cycle, involved in the sclerotization (tanning) of the insect cuticle, melanization and wing spreading. The polypeptide is Bursicon (burs124) (Anopheles gambiae (African malaria mosquito)).